Consider the following 548-residue polypeptide: Chaperonin GroEL (548 aa).

ATP contacts are provided by residues 30-33 (TLGP), K51, 87-91 (DGTTT), G415, 479-481 (NAA), and D495. The interval 524-548 (LPKEDKSSDSSSSPAGGMGGMGGMM) is disordered. Residues 539–548 (GGMGGMGGMM) show a composition bias toward gly residues.

It belongs to the chaperonin (HSP60) family. Forms a cylinder of 14 subunits composed of two heptameric rings stacked back-to-back. Interacts with the co-chaperonin GroES.

The protein resides in the cytoplasm. It catalyses the reaction ATP + H2O + a folded polypeptide = ADP + phosphate + an unfolded polypeptide.. Its function is as follows. Together with its co-chaperonin GroES, plays an essential role in assisting protein folding. The GroEL-GroES system forms a nano-cage that allows encapsulation of the non-native substrate proteins and provides a physical environment optimized to promote and accelerate protein folding. The polypeptide is Chaperonin GroEL (Buchnera aphidicola subsp. Acyrthosiphon pisum (strain Tuc7)).